We begin with the raw amino-acid sequence, 461 residues long: MKVTQKPKIIFIPYPAQGHVTPMLHLASAFLSRGFSPVVMTPESIHRRISATNEDLGITFLALSDGQDRPDAPPSDFFSIENSMENIMPPQLERLLLEEDLDVACVVVDLLASWAIGVADRCGVPVAGFWPVMFAAYRLIQAIPELVRTGLVSQKGCPRQLEKTIVQPEQPLLSAEDLPWLIGTPKAQKKRFKFWQRTLERTKSLRWILTSSFKDEYEDVDNHKASYKKSNDLNKENNGQNPQILHLGPLHNQEATNNITITKTSFWEEDMSCLGWLQEQNPNSVIYISFGSWVSPIGESNIQTLALALEASGRPFLWALNRVWQEGLPPGFVHRVTITKNQGRIVSWAPQLEVLRNDSVGCYVTHCGWNSTMEAVASSRRLLCYPVAGDQFVNCKYIVDVWKIGVRLSGFGEKEVEDGLRKVMEDQDMGERLRKLRDRAMGNEARLSSEMNFTFLKNELN.

Residues Ser292, Ala349–Gln351, His366–Glu374, and Ala388–Gln391 each bind UDP-alpha-D-glucose.

The protein belongs to the UDP-glycosyltransferase family.

The protein is UDP-glycosyltransferase 82A1 (UGT82A1) of Arabidopsis thaliana (Mouse-ear cress).